The sequence spans 447 residues: Glutamate--tRNA ligase 1 (447 aa).

Positions 10-20 match the 'HIGH' region motif; it reads PSPTGMLHVGN. Positions 240 to 244 match the 'KMSKS' region motif; it reads KISKR. Position 243 (Lys-243) interacts with ATP.

This sequence belongs to the class-I aminoacyl-tRNA synthetase family. Glutamate--tRNA ligase type 1 subfamily. In terms of assembly, monomer.

The protein resides in the cytoplasm. It catalyses the reaction tRNA(Glu) + L-glutamate + ATP = L-glutamyl-tRNA(Glu) + AMP + diphosphate. In terms of biological role, catalyzes the attachment of glutamate to tRNA(Glu) in a two-step reaction: glutamate is first activated by ATP to form Glu-AMP and then transferred to the acceptor end of tRNA(Glu). The polypeptide is Glutamate--tRNA ligase 1 (Rickettsia conorii (strain ATCC VR-613 / Malish 7)).